The primary structure comprises 872 residues: Translation initiation factor IF-2 (872 aa).

Over residues 130-155 (AEEEAARAAEEEAARLAEEEAARRAA) the composition is skewed to basic and acidic residues. A disordered region spans residues 130–282 (AEEEAARAAE…RERERLKHMQ (153 aa)). Low complexity predominate over residues 156 to 181 (EPQSEPEAAAPAAEPVAPTAPVAAAP). The segment covering 182–194 (APAPATPVAPAQP) has biased composition (pro residues). The segment covering 195–211 (KPVAAAAPAGDATAVPR) has biased composition (low complexity). Basic and acidic residues predominate over residues 271 to 282 (RARERERLKHMQ). The tr-type G domain occupies 371-539 (TRPPVVTVMG…AILLQAEILD (169 aa)). The interval 380–387 (GHVDHGKT) is G1. 380–387 (GHVDHGKT) is a binding site for GTP. The segment at 405–409 (GITQH) is G2. Residues 427-430 (DTPG) form a G3 region. GTP contacts are provided by residues 427 to 431 (DTPGH) and 481 to 484 (NKID). Residues 481–484 (NKID) are G4. The G5 stretch occupies residues 517 to 519 (SAK).

The protein belongs to the TRAFAC class translation factor GTPase superfamily. Classic translation factor GTPase family. IF-2 subfamily.

Its subcellular location is the cytoplasm. In terms of biological role, one of the essential components for the initiation of protein synthesis. Protects formylmethionyl-tRNA from spontaneous hydrolysis and promotes its binding to the 30S ribosomal subunits. Also involved in the hydrolysis of GTP during the formation of the 70S ribosomal complex. The polypeptide is Translation initiation factor IF-2 (Paramagnetospirillum magneticum (strain ATCC 700264 / AMB-1) (Magnetospirillum magneticum)).